A 512-amino-acid chain; its full sequence is Amidase 2 (512 aa).

Active-site charge relay system residues include Lys122 and Ser197. Residues Ser197 and 218–221 (IGGS) each bind substrate. Catalysis depends on Ser221, which acts as the Acyl-ester intermediate.

Belongs to the amidase family.

The catalysed reaction is a monocarboxylic acid amide + H2O = a monocarboxylate + NH4(+). It functions in the pathway xenobiotic degradation. Its function is as follows. Amidase; part of the Fusarium detoxification of benzoxazolinone cluster 2 (FDB2) involved in the degradation of benzoxazolinones produced by the host plant. Maize, wheat, and rye produce the 2 benzoxazinone phytoanticipins 2,4-dihy-droxy-7-methoxy-1,4-benzoxazin-3-one (DIMBOA) and 2,4-dihydroxy-1,4-benzoxazin-3-one (DIBOA) that, due to their inherent instability once released, spontaneously degrade to the more stable corresponding benzoxazolinones, 6-methoxy-2-benzoxazolinone (MBOA) and 2-benzoxazolinone (BOA), respectively. The first step in the detoxification of benzoxazolinones involves the hydrolysis of the cyclic ester bond of benzoxazolinones by the FDB1 cluster gamma-lactamase MBL1 to aminophenols. MBL1 is able to convert BOA into 2-aminophenol (2-AP), as well as MBOA into 5-methoxy-2-aminophenol (2-AMP). The FDB2 cluster N-malonyltransferase FDB2/NAT1 then metabolizes aminophenols via N-malonylation to non-toxic malonamic acids. FDB2/NAT1 converts 2-AP into N-(2-hydroxyphenyl) malonamic acid (HPMA) and 2-AMP into N-(2-hydroxy-4-methoxyphenyl) malonamic acid (HMPMA). The duplicated dienlactone hydrolases DLH1 and DLH2 may provide redundant function for hydrolyzing the lactone moiety in the BOA molecule. The roles of the amidases an other enzymes encoded by the 2 FDB clusters have not been identified so far. The chain is Amidase 2 from Gibberella moniliformis (strain M3125 / FGSC 7600) (Maize ear and stalk rot fungus).